A 302-amino-acid chain; its full sequence is D-alanine--D-alanine ligase (302 aa).

In terms of domain architecture, ATP-grasp spans 99–298 (KRLFVAEGIP…FEQLIQRIID (200 aa)). Residue 128–183 (LAALGSPVVVKPADGGSTVGVTIAREAGHLPEAVRLALQYSPQVLIEQYIPGQEIT) participates in ATP binding. 3 residues coordinate Mg(2+): D252, E265, and N267.

The protein belongs to the D-alanine--D-alanine ligase family. Requires Mg(2+) as cofactor. It depends on Mn(2+) as a cofactor.

It is found in the cytoplasm. It catalyses the reaction 2 D-alanine + ATP = D-alanyl-D-alanine + ADP + phosphate + H(+). Its pathway is cell wall biogenesis; peptidoglycan biosynthesis. In terms of biological role, cell wall formation. In Gloeobacter violaceus (strain ATCC 29082 / PCC 7421), this protein is D-alanine--D-alanine ligase.